Consider the following 92-residue polypeptide: Alpha-conotoxin-like Mi20.3 (92 aa).

Positions 1–24 (MPKLEMMLLVLLILPLSYFSAAGG) are cleaved as a signal peptide. Positions 25-45 (QVVQGDWRGDGLARYLQRGDR) are excised as a propeptide. Residue Pro55 is modified to 4-hydroxyproline. Cystine bridges form between Cys63/Cys72, Cys68/Cys80, Cys73/Cys90, and Cys78/Cys92.

It belongs to the conotoxin D superfamily. As to quaternary structure, hetero-, homo- or pseudo-homodimer (identical sequence, different post-translational modifications). In terms of tissue distribution, expressed by the venom duct.

The protein resides in the secreted. In terms of biological role, alpha-conotoxins act on postsynaptic membranes, they bind to the nicotinic acetylcholine receptors (nAChR) and thus inhibit them. Through its two C-terminal domains, this homodimeric protein would bind to two nAChR allosteric sites, located outside the nAChR C-loop of the principal binding face and at the adjacent binding interface in a clockwise direction. This toxin specifically blocks mammalian neuronal nAChR of the alpha-7/CHRNA7, alpha-3-beta-2/CHRNA3-CHRNB2 and alpha-4-beta-2/CHRNA4-CHRNB2 subtypes. In Conus miles (Soldier cone), this protein is Alpha-conotoxin-like Mi20.3.